Here is a 196-residue protein sequence, read N- to C-terminus: DnaA initiator-associating protein DiaA (196 aa).

In terms of domain architecture, SIS spans 34–196; that stretch reads VVQSLLNGNK…DNTLFPHQEV (163 aa).

It belongs to the SIS family. DiaA subfamily. Homotetramer; dimer of dimers.

Required for the timely initiation of chromosomal replication via direct interactions with the DnaA initiator protein. The protein is DnaA initiator-associating protein DiaA of Erwinia tasmaniensis (strain DSM 17950 / CFBP 7177 / CIP 109463 / NCPPB 4357 / Et1/99).